Reading from the N-terminus, the 310-residue chain is D-apiose import binding protein (310 aa).

An N-terminal signal peptide occupies residues 1–21 (MKLLKASLVALSLAASTFVYA). D-apiofuranose is bound by residues Asn-35, 111–112 (DR), 158–160 (DTN), Arg-164, Asn-214, Asp-239, and Gln-260.

The protein belongs to the bacterial solute-binding protein 2 family.

Its subcellular location is the periplasm. In terms of biological role, part of an ABC transporter complex involved in D-apiose import. Binds D-apiose, D-ribose and D-ribulose. The sequence is that of D-apiose import binding protein from Actinobacillus succinogenes (strain ATCC 55618 / DSM 22257 / CCUG 43843 / 130Z).